A 419-amino-acid chain; its full sequence is Serine--tRNA ligase (419 aa).

226-228 provides a ligand contact to L-serine; it reads TSE. ATP contacts are provided by residues 257 to 259 and valine 273; that span reads RRE. L-serine is bound at residue glutamate 280. 344-347 contributes to the ATP binding site; that stretch reads ELTS. An L-serine-binding site is contributed by threonine 379.

Belongs to the class-II aminoacyl-tRNA synthetase family. Type-1 seryl-tRNA synthetase subfamily. Homodimer. The tRNA molecule binds across the dimer.

It is found in the cytoplasm. The enzyme catalyses tRNA(Ser) + L-serine + ATP = L-seryl-tRNA(Ser) + AMP + diphosphate + H(+). The catalysed reaction is tRNA(Sec) + L-serine + ATP = L-seryl-tRNA(Sec) + AMP + diphosphate + H(+). It participates in aminoacyl-tRNA biosynthesis; selenocysteinyl-tRNA(Sec) biosynthesis; L-seryl-tRNA(Sec) from L-serine and tRNA(Sec): step 1/1. Catalyzes the attachment of serine to tRNA(Ser). Is also able to aminoacylate tRNA(Sec) with serine, to form the misacylated tRNA L-seryl-tRNA(Sec), which will be further converted into selenocysteinyl-tRNA(Sec). This chain is Serine--tRNA ligase, found in Corynebacterium diphtheriae (strain ATCC 700971 / NCTC 13129 / Biotype gravis).